The sequence spans 337 residues: tRNA N6-adenosine threonylcarbamoyltransferase (337 aa).

Residues H111 and H115 each coordinate Fe cation. Substrate contacts are provided by residues 134–138 (LVSGG), D167, G180, and N272. D300 lines the Fe cation pocket.

It belongs to the KAE1 / TsaD family. It depends on Fe(2+) as a cofactor.

The protein resides in the cytoplasm. It carries out the reaction L-threonylcarbamoyladenylate + adenosine(37) in tRNA = N(6)-L-threonylcarbamoyladenosine(37) in tRNA + AMP + H(+). In terms of biological role, required for the formation of a threonylcarbamoyl group on adenosine at position 37 (t(6)A37) in tRNAs that read codons beginning with adenine. Is involved in the transfer of the threonylcarbamoyl moiety of threonylcarbamoyl-AMP (TC-AMP) to the N6 group of A37, together with TsaE and TsaB. TsaD likely plays a direct catalytic role in this reaction. This Salmonella newport (strain SL254) protein is tRNA N6-adenosine threonylcarbamoyltransferase.